We begin with the raw amino-acid sequence, 289 residues long: Dehydrodolichyl diphosphate synthase 4 (289 aa).

The helical transmembrane segment at 2–22 (LSMLWFLLSLLSLLLLPCLRP) threads the bilayer.

This sequence belongs to the UPP synthase family. It depends on Mg(2+) as a cofactor.

The protein resides in the endoplasmic reticulum membrane. It participates in protein modification; protein glycosylation. Catalyzes cis-prenyl chain elongation to produce the polyprenyl backbone of dolichol, a glycosyl carrier-lipid required for the biosynthesis of several classes of glycoprotein. This is Dehydrodolichyl diphosphate synthase 4 from Arabidopsis thaliana (Mouse-ear cress).